The sequence spans 144 residues: Large ribosomal subunit protein uL15 (144 aa).

The segment at 1-52 (MRLNSLSPAEGAKHSAKRLGRGIGSGLGKTGGRGHKGQKSRTGGGVRRGFEG) is disordered. Residues 21–31 (RGIGSGLGKTG) show a composition bias toward gly residues.

It belongs to the universal ribosomal protein uL15 family. Part of the 50S ribosomal subunit.

Functionally, binds to the 23S rRNA. In Actinobacillus pleuropneumoniae serotype 5b (strain L20), this protein is Large ribosomal subunit protein uL15.